The primary structure comprises 156 residues: 3-hydroxyacyl-[acyl-carrier-protein] dehydratase FabZ (156 aa).

The active site involves His-57.

This sequence belongs to the thioester dehydratase family. FabZ subfamily.

Its subcellular location is the cytoplasm. The catalysed reaction is a (3R)-hydroxyacyl-[ACP] = a (2E)-enoyl-[ACP] + H2O. Involved in unsaturated fatty acids biosynthesis. Catalyzes the dehydration of short chain beta-hydroxyacyl-ACPs and long chain saturated and unsaturated beta-hydroxyacyl-ACPs. In Anaeromyxobacter dehalogenans (strain 2CP-C), this protein is 3-hydroxyacyl-[acyl-carrier-protein] dehydratase FabZ.